The primary structure comprises 839 residues: ATP-binding cassette sub-family F member 1 (839 aa).

A disordered region spans residues 1 to 258; it reads MPKGPKQQPP…KKEKKKLKKQ (258 aa). Phosphoserine is present on serine 22. Residues 29-39 are compositionally biased toward basic residues; it reads KKGKKDKKTKK. The span at 47–64 shows a compositional bias: basic and acidic residues; it reads VEDKQAGEEEKLQKEKEQ. Positions 71–83 are enriched in basic residues; that stretch reads QKKKRDTRKGRRK. Residues serine 105, serine 109, and serine 140 each carry the phosphoserine modification. Residues 136–149 show a composition bias toward acidic residues; it reads IQDESEEEKEEEEE. Over residues 150 to 162 the composition is skewed to basic and acidic residues; that stretch reads KPVLKPAKPEKNR. Threonine 195 carries the phosphothreonine modification. At serine 197 the chain carries Phosphoserine. Residues 206 to 223 show a composition bias toward basic and acidic residues; it reads TKEKEPPRPGKDKDKKGA. At serine 227 the chain carries Phosphoserine. A compositionally biased stretch (basic residues) spans 247–256; that stretch reads LSKKEKKKLK. Residues 298–542 form the ABC transporter 1 domain; it reads IKLEKFSISA…MYQQKQKELL (245 aa). An ATP-binding site is contributed by 330–337; the sequence is GPNGKGKT. The span at 553-574 shows a compositional bias: basic and acidic residues; that stretch reads KELKAGGKSTKQAEKQTKEVLT. The segment at 553-600 is disordered; the sequence is KELKAGGKSTKQAEKQTKEVLTRKQQKCRRKNQDEESQDPPELLKRPR. Position 589 is a phosphoserine (serine 589). The region spanning 619–834 is the ABC transporter 2 domain; that stretch reads LGLHGVTFGY…VLEALGEVMV (216 aa). Residue 652–659 participates in ATP binding; that stretch reads GPNGVGKS.

As to quaternary structure, interacts (via N-terminus) with EIF2S1; the interaction is independent of its phosphorylated status. Associates (via both ABC transporter domains) with the ribosomes. Post-translationally, phosphorylated at phosphoserine and phosphothreonine. Phosphorylation on Ser-109 and Ser-140 by CK2; inhibits association of EIF2 with ribosomes.

Its subcellular location is the cytoplasm. The protein localises to the nucleus. The protein resides in the nucleoplasm. It is found in the nucleus envelope. Required for efficient Cap- and IRES-mediated mRNA translation initiation. Not involved in the ribosome biogenesis. In Rattus norvegicus (Rat), this protein is ATP-binding cassette sub-family F member 1 (Abcf1).